A 527-amino-acid chain; its full sequence is Glutamate--cysteine ligase (527 aa).

Belongs to the glutamate--cysteine ligase type 1 family. Type 1 subfamily.

It carries out the reaction L-cysteine + L-glutamate + ATP = gamma-L-glutamyl-L-cysteine + ADP + phosphate + H(+). It functions in the pathway sulfur metabolism; glutathione biosynthesis; glutathione from L-cysteine and L-glutamate: step 1/2. This is Glutamate--cysteine ligase from Bordetella parapertussis (strain 12822 / ATCC BAA-587 / NCTC 13253).